A 104-amino-acid chain; its full sequence is Thioredoxin-2 (104 aa).

A Thioredoxin domain is found at 2-104; it reads VTQLKSASEY…AIKQAIASNV (103 aa). Active-site nucleophile residues include C31 and C34. Cysteines 31 and 34 form a disulfide. Position 62 is a phosphoserine (S62). Residues K67 and K97 each participate in a glycyl lysine isopeptide (Lys-Gly) (interchain with G-Cter in ubiquitin) cross-link.

Belongs to the thioredoxin family. Monomer. Part of the heterodimeric LMA1 complex together with the proteinase inhibitor PBI2. LMA1 binds to the ATPase SEC18. Post-translationally, reversible disulfide bond formation between Cys-31 and Cys-34, reverted by thioredoxin reductase TRR1 using NADPH as hydrogen donor.

It is found in the cytoplasm. The protein resides in the golgi apparatus membrane. It localises to the nucleus. Functionally, participates as a hydrogen donor in redox reactions through the reversible oxidation of its active center dithiol to a disulfide, accompanied by the transfer of 2 electrons and 2 protons. It is involved in many cellular processes, including deoxyribonucleotide synthesis, repair of oxidatively damaged proteins, protein folding, sulfur metabolism, and redox homeostasis. Thioredoxin-dependent enzymes include phosphoadenosine-phosphosulfate reductase MET16, alkyl-hydroperoxide reductase DOT5, thioredoxin peroxidases TSA1 and TSA2, alkyl hydroperoxide reductase AHP1, and peroxiredoxin HYR1. Thioredoxin is also involved in protection against reducing stress. As part of the LMA1 complex, it is involved in the facilitation of vesicle fusion such as homotypic vacuole and ER-derived COPII vesicle fusion with the Golgi. This activity does not require the redox mechanism. Through its capacity to inactivate the stress response transcription factor YAP1 and its regulator the hydroperoxide stress sensor HYR1, it is involved in feedback regulation of stress response gene expression upon oxidative stress. The sequence is that of Thioredoxin-2 (TRX2) from Saccharomyces cerevisiae (strain ATCC 204508 / S288c) (Baker's yeast).